A 104-amino-acid chain; its full sequence is DNA-binding transcriptional repressor TubR (104 aa).

DNA-binding regions (HTH) lie at residues 43–50 (KTAVAEMI) and 54–65 (KPTVFATVNSFY).

As to quaternary structure, homodimer. Binds to tubC DNA, the TubR-DNA complex binds to TubZ.

Functionally, a DNA-binding protein that is part of the type III plasmid partition system used to ensure correct segregation of the pBtoxis plasmid. Cooperatively binds to the centromere-like site (tubC), which may seed filament formation by the TubZ polymerizing GTPase, stabilizing TubZ filaments. TubR-tubC complexes track the depolymerizing minus end of the filament, probably pulling plasmid within the cell. Required for plasmid replication. Negatively regulates levels of TubZ; its effect on RNA expression has not been shown. Specifically binds iterons, 12-bp imperfect direct repeats that function as a plasmid origin of replication. Four TubR dimers bind to tubC, forming an extended bent DNA-protein filament with protein wrapping helically around the outside of the DNA. This is DNA-binding transcriptional repressor TubR from Bacillus thuringiensis subsp. israelensis.